The sequence spans 374 residues: Dihydrolipoyllysine-residue acetyltransferase component of acetoin cleaving system (374 aa).

Residues 9–84 enclose the Lipoyl-binding domain; sequence IIPIVMPKWG…PVKALLGVLA (76 aa). N6-lipoyllysine is present on Lys50. In terms of domain architecture, AB hydrolase-1 spans 137-360; the sequence is TVLFIHGFGG…DAGHMSQMEK (224 aa).

Requires (R)-lipoate as cofactor.

It carries out the reaction N(6)-[(R)-dihydrolipoyl]-L-lysyl-[protein] + acetyl-CoA = N(6)-[(R)-S(8)-acetyldihydrolipoyl]-L-lysyl-[protein] + CoA. The protein operates within ketone degradation; acetoin degradation. Dihydrolipoamide acetyltransferase involved in acetoin catabolism. This is Dihydrolipoyllysine-residue acetyltransferase component of acetoin cleaving system (acoC) from Cupriavidus necator (strain ATCC 17699 / DSM 428 / KCTC 22496 / NCIMB 10442 / H16 / Stanier 337) (Ralstonia eutropha).